Reading from the N-terminus, the 364-residue chain is Methylthioribose-1-phosphate isomerase (364 aa).

The Proton donor role is filled by aspartate 254.

The protein belongs to the eIF-2B alpha/beta/delta subunits family. MtnA subfamily.

The protein resides in the cytoplasm. It localises to the nucleus. The catalysed reaction is 5-(methylsulfanyl)-alpha-D-ribose 1-phosphate = 5-(methylsulfanyl)-D-ribulose 1-phosphate. It participates in amino-acid biosynthesis; L-methionine biosynthesis via salvage pathway; L-methionine from S-methyl-5-thio-alpha-D-ribose 1-phosphate: step 1/6. Its function is as follows. Catalyzes the interconversion of methylthioribose-1-phosphate (MTR-1-P) into methylthioribulose-1-phosphate (MTRu-1-P). The polypeptide is Methylthioribose-1-phosphate isomerase (Drosophila yakuba (Fruit fly)).